The primary structure comprises 338 residues: 5-dehydro-2-deoxygluconokinase (338 aa).

The protein belongs to the carbohydrate kinase PfkB family.

The enzyme catalyses 5-dehydro-2-deoxy-D-gluconate + ATP = 6-phospho-5-dehydro-2-deoxy-D-gluconate + ADP + H(+). It participates in polyol metabolism; myo-inositol degradation into acetyl-CoA; acetyl-CoA from myo-inositol: step 5/7. Its function is as follows. Catalyzes the phosphorylation of 5-dehydro-2-deoxy-D-gluconate (2-deoxy-5-keto-D-gluconate or DKG) to 6-phospho-5-dehydro-2-deoxy-D-gluconate (DKGP). The polypeptide is 5-dehydro-2-deoxygluconokinase (Mesomycoplasma hyopneumoniae (strain 232) (Mycoplasma hyopneumoniae)).